Here is a 296-residue protein sequence, read N- to C-terminus: Release factor glutamine methyltransferase (296 aa).

S-adenosyl-L-methionine is bound by residues 133 to 137 (GTGSG), aspartate 156, and asparagine 201. 201–204 (NPPY) contacts substrate.

The protein belongs to the protein N5-glutamine methyltransferase family. PrmC subfamily.

The catalysed reaction is L-glutaminyl-[peptide chain release factor] + S-adenosyl-L-methionine = N(5)-methyl-L-glutaminyl-[peptide chain release factor] + S-adenosyl-L-homocysteine + H(+). Functionally, methylates the class 1 translation termination release factors RF1/PrfA and RF2/PrfB on the glutamine residue of the universally conserved GGQ motif. The sequence is that of Release factor glutamine methyltransferase from Rhodopirellula baltica (strain DSM 10527 / NCIMB 13988 / SH1).